The primary structure comprises 389 residues: MHFAKLGAIGLLGSIICAYAASAASKVIIDNDGLTDLQVLFALQAKQQILGVTAIYGDYTLDDSLFLASDVLSTGNLTYCIPSFAGAAQPLLRTNNTFQIWQELYGSYVWQGYWQPEYETANTNNESYIYNTQISAAQFIIDMVKANPNEITIVAAGPMTNLAIALSIWPDLAKNTKSLVIMGGYVDSQIAQVTGGDFLNDMYSDFNLFMEPEAAQTAITADWPELIIAGNITSQVYPSQSLYNGIIARAGGMANIESDSGLSYAKQFVGNGTLPSGSFPFWDEVASAIAAWPEIVNSSYDAYVSVDTAYDSPFYGSLRMVPADLVPKKGVRTAKASMITGINVAMFYQKIYDSLTAEYSSYCMNGTIITPSNITISNTTNTTNTTGFY.

The first 23 residues, 1–23 (MHFAKLGAIGLLGSIICAYAASA), serve as a signal peptide directing secretion.

This sequence belongs to the IUNH family.

The protein resides in the endoplasmic reticulum lumen. This is an uncharacterized protein from Schizosaccharomyces pombe (strain 972 / ATCC 24843) (Fission yeast).